The chain runs to 354 residues: DNA polymerase IV (354 aa).

The 182-residue stretch at 6 to 187 (IIHVDCDCFY…LPVARLHGVG (182 aa)) folds into the UmuC domain. Mg(2+) is bound by residues aspartate 10 and aspartate 105. The active site involves glutamate 106.

This sequence belongs to the DNA polymerase type-Y family. In terms of assembly, monomer. It depends on Mg(2+) as a cofactor.

The protein localises to the cytoplasm. It carries out the reaction DNA(n) + a 2'-deoxyribonucleoside 5'-triphosphate = DNA(n+1) + diphosphate. Its function is as follows. Poorly processive, error-prone DNA polymerase involved in untargeted mutagenesis. Copies undamaged DNA at stalled replication forks, which arise in vivo from mismatched or misaligned primer ends. These misaligned primers can be extended by PolIV. Exhibits no 3'-5' exonuclease (proofreading) activity. May be involved in translesional synthesis, in conjunction with the beta clamp from PolIII. The sequence is that of DNA polymerase IV from Pseudomonas putida (strain GB-1).